The chain runs to 464 residues: Interstitial collagenase A (464 aa).

An N-terminal signal peptide occupies residues 1-17 (MPSLPLLLLLWAASSYS). Positions 18-96 (FPVFHNGDRQ…PRCGVPDVAP (79 aa)) are cleaved as a propeptide — activation peptide. Positions 87–94 (PRCGVPDV) match the Cysteine switch motif. Cys-89 is a Zn(2+) binding site. The tract at residues 95–274 (APYAITHNNP…IQPTGATTPH (180 aa)) is metalloprotease. Asp-155 serves as a coordination point for Ca(2+). Residues His-165 and Asp-167 each coordinate Zn(2+). Ca(2+) contacts are provided by Asp-172 and Gly-173. His-180 serves as a coordination point for Zn(2+). Residues Gly-187, Gly-189, and Asp-191 each contribute to the Ca(2+) site. His-193 contacts Zn(2+). Residues Asp-195 and Glu-198 each coordinate Ca(2+). Asn-202 is a glycosylation site (N-linked (GlcNAc...) asparagine). His-215 lines the Zn(2+) pocket. Residue Glu-216 is part of the active site. Residues His-219 and His-225 each coordinate Zn(2+). 2 Hemopexin repeats span residues 273–322 (PHPC…WPNL) and 323–369 (PVKL…FGFP). An intrachain disulfide couples Cys-276 to Cys-464. Asp-283 contributes to the Ca(2+) binding site. Asn-371 is a glycosylation site (N-linked (GlcNAc...) asparagine). 2 Hemopexin repeats span residues 372–420 (VTHI…FPGI) and 421–464 (DDKV…WFNC). The Ca(2+) site is built by Asp-376 and Asp-425.

The protein belongs to the peptidase M10A family. Ca(2+) is required as a cofactor. It depends on Zn(2+) as a cofactor.

The protein localises to the secreted. It localises to the extracellular space. Its subcellular location is the extracellular matrix. The catalysed reaction is Cleavage of the triple helix of collagen at about three-quarters of the length of the molecule from the N-terminus, at 775-Gly-|-Ile-776 in the alpha1(I) chain. Cleaves synthetic substrates and alpha-macroglobulins at bonds where P1' is a hydrophobic residue.. With respect to regulation, can be activated without removal of the activation peptide. In terms of biological role, cleaves collagens of types I, II, and III at one site in the helical domain. Also cleaves collagens of types VII and X. Able to degrade synthetic peptides and type I and II fibrillar collagen. This is Interstitial collagenase A (Mmp1a) from Mus musculus (Mouse).